Reading from the N-terminus, the 37-residue chain is Large ribosomal subunit protein bL36 (37 aa).

This sequence belongs to the bacterial ribosomal protein bL36 family.

This chain is Large ribosomal subunit protein bL36 (rpmJ), found in Geobacillus stearothermophilus (Bacillus stearothermophilus).